Consider the following 405-residue polypeptide: Acetate kinase (405 aa).

A Mg(2+)-binding site is contributed by asparagine 7. Lysine 14 contributes to the ATP binding site. Arginine 99 contacts substrate. Aspartate 156 serves as the catalytic Proton donor/acceptor. 215 to 219 (HLGNG) serves as a coordination point for ATP. Glutamate 391 provides a ligand contact to Mg(2+).

It belongs to the acetokinase family. As to quaternary structure, homodimer. Mg(2+) serves as cofactor. The cofactor is Mn(2+).

It is found in the cytoplasm. It catalyses the reaction acetate + ATP = acetyl phosphate + ADP. The protein operates within metabolic intermediate biosynthesis; acetyl-CoA biosynthesis; acetyl-CoA from acetate: step 1/2. Catalyzes the formation of acetyl phosphate from acetate and ATP. Can also catalyze the reverse reaction. The polypeptide is Acetate kinase (Trichormus variabilis (strain ATCC 29413 / PCC 7937) (Anabaena variabilis)).